Here is a 276-residue protein sequence, read N- to C-terminus: uncharacterized protein (276 aa).

A disordered region spans residues 1 to 20 (MMSDEQHQGGDGQTTTNTNT).

This is an uncharacterized protein from Dictyostelium discoideum (Social amoeba).